A 122-amino-acid chain; its full sequence is MAPRGRKRKAEAAVVAVAEKREKLANGGEGMEEATVVIEHCTSURVYGRNAAALSQALRLEAPELPVKVNPTKPRRGSFEVTLLRPDGSSAELWTGIKKGPPRKLKFPEPQEVVEELKKYLS.

K20 carries the post-translational modification N6-acetyllysine. A cross-link (cysteinyl-selenocysteine (Cys-Sec); redox-active) is located at residues 41 to 44 (CTSU). Position 44 (U44) is a non-standard amino acid, selenocysteine.

Belongs to the SelWTH family.

In terms of biological role, may be involved in a redox-related process. The protein is Selenoprotein H of Homo sapiens (Human).